The following is a 345-amino-acid chain: Protein CHROMOSOME TRANSMISSION FIDELITY 7 (345 aa).

The segment at 96-120 adopts a CCHH-type zinc-finger fold; sequence RHCAECGAKYAPGDELDEKNHQSFH.

This sequence belongs to the acetyltransferase family. ECO subfamily. Autoacetylated. Expressed in roots, stems, leaves, young seedlings and flower buds. Detected in the embryo, but not in the endosperm.

It is found in the nucleus. The protein localises to the cytoplasm. Its function is as follows. Acetyltransferase required for the establishment of sister chromatid cohesion. Involved in preservation of genome integrity and meiosis. Required for DNA repair and for the regulation of chromosome segregation during mitotic cell division. Knock-down mutants are extremely dwarf. Regulator of sister chromatid cohesion in meiosis which negatively regulates cohesin association with chromatin, acting as an antagonist of WAPL1 and WAPL2. The protein is Protein CHROMOSOME TRANSMISSION FIDELITY 7 of Arabidopsis thaliana (Mouse-ear cress).